Consider the following 257-residue polypeptide: tRNA (cytidine/uridine/adenosine-2'-O-)-methyltransferase TrmJ (257 aa).

S-adenosyl-L-methionine-binding positions include 79–82, 115–117, I135, and 142–144; these read TSAR, GRE, and GSL.

Belongs to the class IV-like SAM-binding methyltransferase superfamily. RNA methyltransferase TrmH family. As to quaternary structure, homodimer.

The protein localises to the cytoplasm. It catalyses the reaction cytidine(32) in tRNA + S-adenosyl-L-methionine = 2'-O-methylcytidine(32) in tRNA + S-adenosyl-L-homocysteine + H(+). The catalysed reaction is uridine(32) in tRNA + S-adenosyl-L-methionine = 2'-O-methyluridine(32) in tRNA + S-adenosyl-L-homocysteine + H(+). The enzyme catalyses adenosine(32) in tRNA + S-adenosyl-L-methionine = 2'-O-methyladenosine(32) in tRNA + S-adenosyl-L-homocysteine + H(+). Its function is as follows. Catalyzes the formation of 2'O-methylated cytidine (Cm32), 2'O-methylated uridine (Um32) or 2'O-methylated adenosine (Am32) at position 32 in tRNA. Confers resistance to oxidative stress. This chain is tRNA (cytidine/uridine/adenosine-2'-O-)-methyltransferase TrmJ, found in Pseudomonas aeruginosa (strain UCBPP-PA14).